Here is a 424-residue protein sequence, read N- to C-terminus: Phosphomethylpyrimidine synthase (424 aa).

Residues Asn-66, Met-95, Tyr-124, His-163, 185–187, 226–229, and Glu-265 each bind substrate; these read SRG and DGMR. Residue His-269 coordinates Zn(2+). Phe-292 contacts substrate. His-333 is a Zn(2+) binding site. [4Fe-4S] cluster is bound by residues Cys-408, Cys-411, and Cys-415.

The protein belongs to the ThiC family. The cofactor is [4Fe-4S] cluster.

The enzyme catalyses 5-amino-1-(5-phospho-beta-D-ribosyl)imidazole + S-adenosyl-L-methionine = 4-amino-2-methyl-5-(phosphooxymethyl)pyrimidine + CO + 5'-deoxyadenosine + formate + L-methionine + 3 H(+). Its pathway is cofactor biosynthesis; thiamine diphosphate biosynthesis. Functionally, catalyzes the synthesis of the hydroxymethylpyrimidine phosphate (HMP-P) moiety of thiamine from aminoimidazole ribotide (AIR) in a radical S-adenosyl-L-methionine (SAM)-dependent reaction. The sequence is that of Phosphomethylpyrimidine synthase from Thermotoga sp. (strain RQ2).